Here is a 205-residue protein sequence, read N- to C-terminus: Holliday junction branch migration complex subunit RuvA (205 aa).

Residues 1–64 (MIGHIQGVLT…EDAQLLYGFI (64 aa)) form a domain I region. The domain II stretch occupies residues 65 to 143 (SASERSLFRL…DWQPSTPFTD (79 aa)). The interval 136 to 157 (QPSTPFTDRAPLDSQGMDAREH) is disordered. The segment at 144 to 156 (RAPLDSQGMDARE) is flexible linker. The interval 157–205 (HPADARTDAISALQSLGYKENQAEKALQKVYSAEHNSETLIRLALKQLS) is domain III.

It belongs to the RuvA family. As to quaternary structure, homotetramer. Forms an RuvA(8)-RuvB(12)-Holliday junction (HJ) complex. HJ DNA is sandwiched between 2 RuvA tetramers; dsDNA enters through RuvA and exits via RuvB. An RuvB hexamer assembles on each DNA strand where it exits the tetramer. Each RuvB hexamer is contacted by two RuvA subunits (via domain III) on 2 adjacent RuvB subunits; this complex drives branch migration. In the full resolvosome a probable DNA-RuvA(4)-RuvB(12)-RuvC(2) complex forms which resolves the HJ.

The protein localises to the cytoplasm. Functionally, the RuvA-RuvB-RuvC complex processes Holliday junction (HJ) DNA during genetic recombination and DNA repair, while the RuvA-RuvB complex plays an important role in the rescue of blocked DNA replication forks via replication fork reversal (RFR). RuvA specifically binds to HJ cruciform DNA, conferring on it an open structure. The RuvB hexamer acts as an ATP-dependent pump, pulling dsDNA into and through the RuvAB complex. HJ branch migration allows RuvC to scan DNA until it finds its consensus sequence, where it cleaves and resolves the cruciform DNA. In Idiomarina loihiensis (strain ATCC BAA-735 / DSM 15497 / L2-TR), this protein is Holliday junction branch migration complex subunit RuvA.